The chain runs to 445 residues: Cyclic GMP-AMP synthase-like receptor 1 (445 aa).

Mg(2+) is bound by residues E70, D72, and D186. ATP is bound at residue 70 to 72 (EYD). GTP is bound by residues D186 and 232 to 239 (RTSFYEAE). ATP is bound by residues 236–239 (YEAE), K257, and 270–274 (SYHIK). The tract at residues 357–445 (LNDDNENSVH…KSKTTTPKPS (89 aa)) is disordered. Positions 377-398 (QKMEKTSTESEQKKPTETKPNA) are enriched in basic and acidic residues. Positions 435 to 445 (TKSKTTTPKPS) are enriched in low complexity.

Belongs to the mab-21 family. Requires Mg(2+) as cofactor. The cofactor is Mn(2+).

The catalysed reaction is GTP + ATP = 3',2'-cGAMP + 2 diphosphate. The enzyme catalyses GTP + ATP = pppA(2'-5')pG + diphosphate. It catalyses the reaction pppA(2'-5')pG = 3',2'-cGAMP + diphosphate. With respect to regulation, the enzyme activity is specifically activated by double-stranded RNA (dsRNA). Nucleotidyltransferase that catalyzes the formation of cyclic GMP-AMP (3',2'-cGAMP) from ATP and GTP and plays a key role in innate immunity. Synthesizes 3',2'-cGAMP in a two-step reaction through production of the linear intermediate pppA(2'-5')pG. Acts as a key sensor of double-stranded RNA (dsRNA), the presence of dsRNA in the cytoplasm being a danger signal that triggers the immune responses. Directly binds dsRNA, activating the nucleotidyltransferase activity, leading to synthesis of 3',2'-cGAMP, a second messenger that binds to and activates Sting, thereby triggering the antiviral immune response via activation of the NF-kappa-B transcription factor Rel (Relish). This chain is Cyclic GMP-AMP synthase-like receptor 1, found in Drosophila erecta (Fruit fly).